The primary structure comprises 215 residues: Probable transaldolase (215 aa).

Residue lysine 83 is the Schiff-base intermediate with substrate of the active site.

This sequence belongs to the transaldolase family. Type 3B subfamily.

Its subcellular location is the cytoplasm. The enzyme catalyses D-sedoheptulose 7-phosphate + D-glyceraldehyde 3-phosphate = D-erythrose 4-phosphate + beta-D-fructose 6-phosphate. It participates in carbohydrate degradation; pentose phosphate pathway; D-glyceraldehyde 3-phosphate and beta-D-fructose 6-phosphate from D-ribose 5-phosphate and D-xylulose 5-phosphate (non-oxidative stage): step 2/3. Its function is as follows. Transaldolase is important for the balance of metabolites in the pentose-phosphate pathway. This chain is Probable transaldolase, found in Streptococcus agalactiae serotype III (strain NEM316).